We begin with the raw amino-acid sequence, 300 residues long: MTWKDRLPAVRGKLLRDEPLAPFTWFRVGGPADVIFLPEDEDDLAAFLKALPAEVPVTVLGVGSNTLVRDGGVDGVVIRLGKAFAKVEPRGEGRLYAGAAALDAVVAREAGKAGIAGLEFYRGVPGTIGGALVMNAGCYGAETKDVLVEAYALTRAGERLTLSNADLGYSYRKSARAAAEPLIFLGALFEGRPDDPAAIEARMAEITERREKTQPIREKTGGSTFKNPPGHSSWKLVDEAGWRGKLFGGAMFSPLHSNFLINTGEATAADLEGLGEAVRADVKAKFGVDLDWEIKRIGRP.

The region spanning 27–216 (RVGGPADVIF…TERREKTQPI (190 aa)) is the FAD-binding PCMH-type domain. The active site involves Arg172. Ser223 acts as the Proton donor in catalysis. Residue Glu293 is part of the active site.

It belongs to the MurB family. The cofactor is FAD.

It localises to the cytoplasm. The catalysed reaction is UDP-N-acetyl-alpha-D-muramate + NADP(+) = UDP-N-acetyl-3-O-(1-carboxyvinyl)-alpha-D-glucosamine + NADPH + H(+). It functions in the pathway cell wall biogenesis; peptidoglycan biosynthesis. Functionally, cell wall formation. This chain is UDP-N-acetylenolpyruvoylglucosamine reductase, found in Phenylobacterium zucineum (strain HLK1).